Consider the following 837-residue polypeptide: Ubiquitin carboxyl-terminal hydrolase A (837 aa).

The segment at 166 to 277 adopts a UBP-type; degenerate zinc-finger fold; that stretch reads PSAFAESIIQ…QHLTHWGLNP (112 aa). The region spanning 319–835 is the USP domain; that stretch reads TGIENLGNSC…LGYIYFYKRQ (517 aa). The active-site Nucleophile is cysteine 328. Positions 628 to 669 constitute a UBA 1 domain; that stretch reads SFNQEVLDTLLSMDFPLVRCKKALLATGGKDAELAMNWIFEH. Positions 676-695 are disordered; the sequence is DIEQTPVNNNNNNNNSSNSN. Residues 683-695 show a composition bias toward low complexity; that stretch reads NNNNNNNNSSNSN. The UBA 2 domain occupies 700–740; that stretch reads VFNSQDVDNIIGMGFTDSQAKLALKNTKGNLERAADWLFSH. Histidine 797 acts as the Proton acceptor in catalysis.

The protein belongs to the peptidase C19 family.

It catalyses the reaction Thiol-dependent hydrolysis of ester, thioester, amide, peptide and isopeptide bonds formed by the C-terminal Gly of ubiquitin (a 76-residue protein attached to proteins as an intracellular targeting signal).. Its function is as follows. Required for development but not growth. The polypeptide is Ubiquitin carboxyl-terminal hydrolase A (ubpA) (Dictyostelium discoideum (Social amoeba)).